Here is a 188-residue protein sequence, read N- to C-terminus: Elongation factor P (188 aa).

It belongs to the elongation factor P family.

It localises to the cytoplasm. It functions in the pathway protein biosynthesis; polypeptide chain elongation. Its function is as follows. Involved in peptide bond synthesis. Stimulates efficient translation and peptide-bond synthesis on native or reconstituted 70S ribosomes in vitro. Probably functions indirectly by altering the affinity of the ribosome for aminoacyl-tRNA, thus increasing their reactivity as acceptors for peptidyl transferase. The protein is Elongation factor P of Methylorubrum populi (strain ATCC BAA-705 / NCIMB 13946 / BJ001) (Methylobacterium populi).